We begin with the raw amino-acid sequence, 203 residues long: Dephospho-CoA kinase (203 aa).

The DPCK domain occupies 4-203 (VIGITGGIAT…EEGYIQSESE (200 aa)). 12–17 (ATGKST) is a binding site for ATP.

This sequence belongs to the CoaE family.

It is found in the cytoplasm. The enzyme catalyses 3'-dephospho-CoA + ATP = ADP + CoA + H(+). It participates in cofactor biosynthesis; coenzyme A biosynthesis; CoA from (R)-pantothenate: step 5/5. Catalyzes the phosphorylation of the 3'-hydroxyl group of dephosphocoenzyme A to form coenzyme A. This is Dephospho-CoA kinase from Staphylococcus epidermidis (strain ATCC 12228 / FDA PCI 1200).